Reading from the N-terminus, the 408-residue chain is MSNNTNKQYTTQELNSMSNDDLARLGTELDDVTIAYRKERFPVANDPAEKRAARSVGIWAALGILGGIGFLITYIFWPWEYQGHGDDGLMWYTLYTPMLGITSGLCIISLGIAGVLYVKKFIPEEIAVQRRHDGPSEEVDRRTLVALLNDSWQTSTLGRRKVLQGLLAGGAVMAGLTIVAPLGGMIKNPWRPQDGPMDVMGDGTLWTSGWTLQEQGVKLYLGRDTGAIAESHTGESGQHWITTGVSRLVRMRPEDLAAASMETVFPLPAEDVNDGDLYDPQRDVYTNHMHSIHGPRNAVMLIRLRTADAERVIEREGQESFHYGDYYAYSKICTHIGCPTSLYEAQTNRILCPCHQSQFDALHYGKPVFGPAARALPQLPITVDEEGYLIADGNFIEPLGPAFWERKS.

Helical transmembrane passes span 56 to 76, 98 to 118, and 166 to 186; these read VGIW…TYIF, MLGI…VLYV, and LLAG…GGMI. One can recognise a Rieske domain in the interval 293 to 390; it reads HGPRNAVMLI…ITVDEEGYLI (98 aa). Positions 333, 335, 352, and 355 each coordinate [2Fe-2S] cluster. A disulfide bridge links Cys-338 with Cys-354.

The protein belongs to the Rieske iron-sulfur protein family. As to quaternary structure, the cytochrome bc1 complex is composed of a cytochrome b (QcrB), the Rieske iron-sulfur protein (QcrA) and a diheme cytochrome c (QcrC) subunit. The bc1 complex forms a supercomplex with cytochrome c oxidase (cytochrome aa3). [2Fe-2S] cluster is required as a cofactor.

It localises to the cell membrane. Iron-sulfur subunit of the cytochrome bc1 complex, an essential component of the respiratory electron transport chain required for ATP synthesis. The bc1 complex catalyzes the oxidation of menaquinol and the reduction of cytochrome c in the respiratory chain. The bc1 complex operates through a Q-cycle mechanism that couples electron transfer to generation of the proton gradient that drives ATP synthesis. In Corynebacterium efficiens (strain DSM 44549 / YS-314 / AJ 12310 / JCM 11189 / NBRC 100395), this protein is Cytochrome bc1 complex Rieske iron-sulfur subunit (qcrA).